Consider the following 463-residue polypeptide: ATP synthase subunit beta (463 aa).

ATP is bound at residue 152 to 159 (GGAGVGKT).

Belongs to the ATPase alpha/beta chains family. F-type ATPases have 2 components, CF(1) - the catalytic core - and CF(0) - the membrane proton channel. CF(1) has five subunits: alpha(3), beta(3), gamma(1), delta(1), epsilon(1). CF(0) has three main subunits: a(1), b(2) and c(9-12). The alpha and beta chains form an alternating ring which encloses part of the gamma chain. CF(1) is attached to CF(0) by a central stalk formed by the gamma and epsilon chains, while a peripheral stalk is formed by the delta and b chains.

It localises to the cell inner membrane. It carries out the reaction ATP + H2O + 4 H(+)(in) = ADP + phosphate + 5 H(+)(out). Its function is as follows. Produces ATP from ADP in the presence of a proton gradient across the membrane. The catalytic sites are hosted primarily by the beta subunits. The polypeptide is ATP synthase subunit beta (Shewanella oneidensis (strain ATCC 700550 / JCM 31522 / CIP 106686 / LMG 19005 / NCIMB 14063 / MR-1)).